A 396-amino-acid chain; its full sequence is Probable sugar efflux transporter (396 aa).

12 helical membrane-spanning segments follow: residues 15-35 (VVTLAVAAFIFNTTEFVPVGL), 50-70 (VGIMLTIYAWVVALMSLPFML), 81-101 (LICLFVVFIASHVLSFLSWSF), 103-123 (VLVISRIGVAFAHAIFWSITA), 136-156 (AQALSLIATGTALAMVLGLPL), 170-190 (FFAIGIGAFITLLCLIKLLPL), 209-229 (PALMSIYLLTVVVVTAHYTAY), 246-266 (FATALLLLLGGAGIIGSVIFG), 275-295 (ALVSTAIALLLVCLALLLPAA), 299-319 (IHLGVLSIFWGIAMMIIGLGM), 333-353 (VAMALFSGIFNIGIGAGALVG), and 364-384 (MIGYVGAVPAFAALIWSIIIF).

The protein belongs to the major facilitator superfamily. SotB (TC 2.A.1.2) family.

It is found in the cell inner membrane. In terms of biological role, involved in the efflux of sugars. The physiological role may be the reduction of the intracellular concentration of toxic sugars or sugar metabolites. The protein is Probable sugar efflux transporter of Escherichia coli O17:K52:H18 (strain UMN026 / ExPEC).